We begin with the raw amino-acid sequence, 710 residues long: Chaperonin-containing T-complex member BBS12 (710 aa).

It belongs to the TCP-1 chaperonin family. BBS12 subfamily. Component of the chaperonin-containing T-complex (TRiC), a heterooligomeric complex of about 850 to 900 kDa that forms two stacked rings, 12 to 16 nm in diameter. Interacts with MKKS.

Its subcellular location is the cell projection. It is found in the cilium. In terms of biological role, component of the chaperonin-containing T-complex (TRiC), a molecular chaperone complex that assists the folding of proteins upon ATP hydrolysis. As part of the TRiC complex may play a role in the assembly of BBSome, a complex involved in ciliogenesis regulating transports vesicles to the cilia. Involved in adipogenic differentiation. This Homo sapiens (Human) protein is Chaperonin-containing T-complex member BBS12 (BBS12).